Consider the following 50-residue polypeptide: HILKHNGSKPIRCPECNYTCVNRSMLTSHMKSHSNTYPYRCLDCNYATKY.

3 C2H2-type zinc fingers span residues 1-5 (HILKH), 11-33 (IRCPECNYTCVNRSMLTSHMKSH), and 39-50 (YRCLDCNYATKY).

It belongs to the hunchback C2H2-type zinc-finger protein family.

Its subcellular location is the nucleus. In terms of biological role, gap class segmentation protein that controls development of head structures. This chain is Protein hunchback (hb), found in Bradysia coprophila (Dark-winged fungus gnat).